Here is a 337-residue protein sequence, read N- to C-terminus: Nicotinate-nucleotide--dimethylbenzimidazole phosphoribosyltransferase (337 aa).

The active-site Proton acceptor is the E305.

This sequence belongs to the CobT family.

The enzyme catalyses 5,6-dimethylbenzimidazole + nicotinate beta-D-ribonucleotide = alpha-ribazole 5'-phosphate + nicotinate + H(+). It functions in the pathway nucleoside biosynthesis; alpha-ribazole biosynthesis; alpha-ribazole from 5,6-dimethylbenzimidazole: step 1/2. In terms of biological role, catalyzes the synthesis of alpha-ribazole-5'-phosphate from nicotinate mononucleotide (NAMN) and 5,6-dimethylbenzimidazole (DMB). The polypeptide is Nicotinate-nucleotide--dimethylbenzimidazole phosphoribosyltransferase (Jannaschia sp. (strain CCS1)).